We begin with the raw amino-acid sequence, 220 residues long: Deoxyribose-phosphate aldolase (220 aa).

The active-site Proton donor/acceptor is the D89. The Schiff-base intermediate with acetaldehyde role is filled by K151. K180 acts as the Proton donor/acceptor in catalysis.

The protein belongs to the DeoC/FbaB aldolase family. DeoC type 1 subfamily.

It is found in the cytoplasm. The catalysed reaction is 2-deoxy-D-ribose 5-phosphate = D-glyceraldehyde 3-phosphate + acetaldehyde. Its pathway is carbohydrate degradation; 2-deoxy-D-ribose 1-phosphate degradation; D-glyceraldehyde 3-phosphate and acetaldehyde from 2-deoxy-alpha-D-ribose 1-phosphate: step 2/2. Functionally, catalyzes a reversible aldol reaction between acetaldehyde and D-glyceraldehyde 3-phosphate to generate 2-deoxy-D-ribose 5-phosphate. This is Deoxyribose-phosphate aldolase from Mycoplasmopsis pulmonis (strain UAB CTIP) (Mycoplasma pulmonis).